The primary structure comprises 184 residues: Protein GrpE (184 aa).

The segment at 1 to 32 (MEEQKQTPSTPTPDTAAEAAVNAATAAPETAG) is disordered. A compositionally biased stretch (low complexity) spans 12 to 32 (TPDTAAEAAVNAATAAPETAG).

Belongs to the GrpE family. As to quaternary structure, homodimer.

It is found in the cytoplasm. Participates actively in the response to hyperosmotic and heat shock by preventing the aggregation of stress-denatured proteins, in association with DnaK and GrpE. It is the nucleotide exchange factor for DnaK and may function as a thermosensor. Unfolded proteins bind initially to DnaJ; upon interaction with the DnaJ-bound protein, DnaK hydrolyzes its bound ATP, resulting in the formation of a stable complex. GrpE releases ADP from DnaK; ATP binding to DnaK triggers the release of the substrate protein, thus completing the reaction cycle. Several rounds of ATP-dependent interactions between DnaJ, DnaK and GrpE are required for fully efficient folding. The protein is Protein GrpE of Cupriavidus pinatubonensis (strain JMP 134 / LMG 1197) (Cupriavidus necator (strain JMP 134)).